The sequence spans 85 residues: Conotoxin Im28.1 (85 aa).

The signal sequence occupies residues 1-21 (MPKLEMMLLVLLILPLCYIDA). The propeptide occupies 22–40 (VGPPPPWNMEDEIIEHWQK).

Belongs to the conotoxin D superfamily. Post-translationally, contains 5 disulfide bonds. In terms of tissue distribution, expressed by the venom duct.

Its subcellular location is the secreted. In terms of biological role, probable neurotoxin. The sequence is that of Conotoxin Im28.1 from Conus imperialis (Imperial cone).